The primary structure comprises 1358 residues: DNA mismatch repair protein Msh6 (1358 aa).

Residues 1–87 are disordered; that stretch reads MSRQSTLYSF…SSAQAVPPSS (87 aa). A phosphoserine mark is found at Ser14, Ser38, and Ser40. Residues 25-46 show a composition bias toward low complexity; the sequence is AEASRQGAAASGASASRGGDAA. Lys67 is subject to N6-acetyllysine. The segment covering 76–87 has biased composition (low complexity); that stretch reads ASSSAQAVPPSS. Residues Ser91, Ser137, Ser200, Ser219, and Ser227 each carry the phosphoserine modification. Positions 92 to 154 constitute a PWWP domain; the sequence is PGDLVWAKME…KRMLKPYTGS (63 aa). Positions 197–360 are disordered; sequence DEPSEPEEEE…VSGGGNDSSG (164 aa). 2 stretches are compositionally biased toward acidic residues: residues 198–209 and 219–231; these read EPSEPEEEEETE and SEEDNYNESEEEA. Positions 240 to 249 are enriched in basic residues; it reads RSSRQVKKRR. Phosphoserine occurs at positions 252, 254, 256, and 261. Basic and acidic residues predominate over residues 263–273; it reads VEFKPDTKQEG. Thr269 is subject to Phosphothreonine. Phosphoserine occurs at positions 274, 275, 279, and 280. The segment covering 329 to 351 has biased composition (polar residues); the sequence is LSETKSTLSAFSAPQNSESQTHV. Position 487 is a phosphothreonine (Thr487). Lys503 carries the N6-acetyllysine modification. Phosphoserine is present on residues Ser827 and Ser932. Thr1007 is modified (phosphothreonine). 1132-1139 provides a ligand contact to ATP; the sequence is GPNMGGKS.

This sequence belongs to the DNA mismatch repair MutS family. In terms of assembly, component of the DNA mismatch repair (MMR) complex composed at least of MSH2, MSH3, MSH6, PMS1 and MLH1. Heterodimer consisting of MSH2-MSH6 (MutS alpha). Forms a ternary complex with MutL alpha (MLH1-PMS1). Interacts with MCM9. Part of the BRCA1-associated genome surveillance complex (BASC), which contains BRCA1, MSH2, MSH6, MLH1, ATM, BLM, PMS2 and the RAD50-MRE11-NBS1 protein complex. This association could be a dynamic process changing throughout the cell cycle and within subnuclear domains. Post-translationally, phosphorylated by PRKCZ, which may prevent MutS alpha degradation by the ubiquitin-proteasome pathway.

The protein localises to the nucleus. It is found in the chromosome. In terms of biological role, component of the post-replicative DNA mismatch repair system (MMR). Heterodimerizes with MSH2 to form MutS alpha, which binds to DNA mismatches thereby initiating DNA repair. When bound, MutS alpha bends the DNA helix and shields approximately 20 base pairs, and recognizes single base mismatches and dinucleotide insertion-deletion loops (IDL) in the DNA. After mismatch binding, forms a ternary complex with the MutL alpha heterodimer, which is thought to be responsible for directing the downstream MMR events, including strand discrimination, excision, and resynthesis. ATP binding and hydrolysis play a pivotal role in mismatch repair functions. The ATPase activity associated with MutS alpha regulates binding similar to a molecular switch: mismatched DNA provokes ADP--&gt;ATP exchange, resulting in a discernible conformational transition that converts MutS alpha into a sliding clamp capable of hydrolysis-independent diffusion along the DNA backbone. This transition is crucial for mismatch repair. MutS alpha may also play a role in DNA homologous recombination repair. Recruited on chromatin in G1 and early S phase via its PWWP domain that specifically binds trimethylated 'Lys-36' of histone H3 (H3K36me3): early recruitment to chromatin to be replicated allowing a quick identification of mismatch repair to initiate the DNA mismatch repair reaction. In Mus musculus (Mouse), this protein is DNA mismatch repair protein Msh6.